A 484-amino-acid chain; its full sequence is Dynein regulatory complex subunit 2 (484 aa).

Coiled-coil stretches lie at residues 92–160 and 374–403; these read VDCK…RKTI and KEQEGIEENNLEELTEELAKVMVDYTGMEN.

Belongs to the DRC2 family. In terms of assembly, component of the nexin-dynein regulatory complex (N-DRC). Interacts with DRC1.

It localises to the cytoplasm. The protein resides in the cytoskeleton. It is found in the flagellum basal body. The protein localises to the cell projection. Its subcellular location is the cilium. It localises to the flagellum. The protein resides in the flagellum axoneme. In terms of biological role, component of the nexin-dynein regulatory complex (N-DRC), a key regulator of ciliary/flagellar motility which maintains the alignment and integrity of the distal axoneme and regulates microtubule sliding in motile axonemes. Plays a critical role in the assembly of N-DRC and also stabilizes the assembly of multiple inner dynein arms and radial spokes. Coassembles with DRC1 to form a central scaffold needed for assembly of the N-DRC and its attachment to the outer doublet microtubules. The protein is Dynein regulatory complex subunit 2 (CCDC65) of Macaca fascicularis (Crab-eating macaque).